The following is a 188-amino-acid chain: Cytochrome c oxidase assembly protein CtaG (188 aa).

Residues 1 to 8 (MSKKSNKN) are Cytoplasmic-facing. A helical; Signal-anchor for type II membrane protein membrane pass occupies residues 9–31 (LAFSLLGLIISMVLLSFASVPIY). Residues 32–188 (NLFCKVTGYG…SSLRGNYVSN (157 aa)) lie on the Periplasmic side of the membrane.

Belongs to the COX11/CtaG family.

Its subcellular location is the cell inner membrane. Exerts its effect at some terminal stage of cytochrome c oxidase synthesis, probably by being involved in the insertion of the copper B into subunit I. This Rickettsia conorii (strain ATCC VR-613 / Malish 7) protein is Cytochrome c oxidase assembly protein CtaG.